The following is a 539-amino-acid chain: Nucleoporin NUP60 (539 aa).

4 positions are modified to phosphoserine: Ser10, Ser49, Ser81, and Ser89. The disordered stretch occupies residues 44–80 (DSARVSPRNNVANKQPRNESFNRRISSMPGGYFHSEI). A coiled-coil region spans residues 91 to 118 (VVSAVGEARNDIENKEEEYDETHETNIS). 4 positions are modified to phosphoserine: Ser162, Ser171, Ser214, and Ser222. Polar residues-rich tracts occupy residues 242–252 (TANTSAQSIAS) and 258–267 (SGVSKSAPSK). Disordered stretches follow at residues 242–267 (TANT…APSK), 305–329 (IRKH…TTVK), and 347–493 (NATK…GKHI). The span at 347 to 359 (NATKISPSAPSKD) shows a compositional bias: polar residues. 4 positions are modified to phosphoserine: Ser352, Ser360, Ser374, and Ser382. 2 stretches are compositionally biased toward polar residues: residues 395–433 (SAFN…TNLQ) and 448–485 (GDST…LSQE). 2 FXF repeats span residues 399-401 (FSF) and 427-429 (FNF). Residue Thr460 is modified to Phosphothreonine. The stretch at 469-471 (FVF) is one FXF 3 repeat. Phosphoserine occurs at positions 480 and 483. An FXF 4 repeat occupies 509–511 (FDF).

Component of the nuclear pore complex (NPC). NPC constitutes the exclusive means of nucleocytoplasmic transport. NPCs allow the passive diffusion of ions and small molecules and the active, nuclear transport receptor-mediated bidirectional transport of macromolecules such as proteins, RNAs, ribonucleoparticles (RNPs), and ribosomal subunits across the nuclear envelope. Due to its 8-fold rotational symmetry, all subunits are present with 8 copies or multiples thereof. Binds to NUP1 and NUP2 forming the nuclear basket and the distal ring. The interaction with NUP2 is GSP1-GTP-dependent. Interacts through its FG repeats with karyopherins, such as KAP123 and KAP95-SRP1 (KAP60). Also interacts with GSP1-GTP and SRM1 (PRP20), where NUP60 reduces SRM1 activity, thus inhibiting GSP1 guanine nucleotide dissociation. Phosphorylated by CDC28.

Its subcellular location is the nucleus. It localises to the nuclear pore complex. It is found in the nucleus membrane. Its function is as follows. Functions as a component of the nuclear pore complex (NPC). NPC components, collectively referred to as nucleoporins (NUPs), can play the role of both NPC structural components and of docking or interaction partners for transiently associated nuclear transport factors. Active directional transport is assured by both, a Phe-Gly (FG) repeat affinity gradient for these transport factors across the NPC and a transport cofactor concentration gradient across the nuclear envelope (GSP1 and GSP2 GTPases associated predominantly with GTP in the nucleus, with GDP in the cytoplasm). This is Nucleoporin NUP60 (NUP60) from Saccharomyces cerevisiae (strain ATCC 204508 / S288c) (Baker's yeast).